A 275-amino-acid chain; its full sequence is MTLQQQIIKALGAKPQINAEEEIRRSIDFLKSYLQTYPFIKSLVLGISGGQDSTLAGKLCQMAINELRQETGNESLQFIAVRLPYGVQADEQDCQDAIAFIQPDRVLTVNIKGAVLASEQALREAGIELSDFVRGNEKARERMKAQYSIAGMTSGVVVGTDHAAEAITGFFTKYGDGGTDINPLYRLNKRQGKQLLAALGCPEHLYKKAPTADLEDDRPSLPDEVVLGVTYDNIDDYLEGKNVPEQVARTIENWYLKTEHKRRPPITVFDDFWKK.

Residue 46–53 participates in ATP binding; that stretch reads GISGGQDS. Residue aspartate 52 participates in Mg(2+) binding. Arginine 140 lines the deamido-NAD(+) pocket. ATP is bound at residue threonine 160. Glutamate 165 is a binding site for Mg(2+). Positions 173 and 180 each coordinate deamido-NAD(+). Positions 189 and 211 each coordinate ATP. 260-261 is a deamido-NAD(+) binding site; sequence HK.

Belongs to the NAD synthetase family. In terms of assembly, homodimer.

The catalysed reaction is deamido-NAD(+) + NH4(+) + ATP = AMP + diphosphate + NAD(+) + H(+). It functions in the pathway cofactor biosynthesis; NAD(+) biosynthesis; NAD(+) from deamido-NAD(+) (ammonia route): step 1/1. Functionally, catalyzes the ATP-dependent amidation of deamido-NAD to form NAD. Uses ammonia as a nitrogen source. This is NH(3)-dependent NAD(+) synthetase from Shigella dysenteriae serotype 1 (strain Sd197).